Here is a 139-residue protein sequence, read N- to C-terminus: CLAVATA3/ESR (CLE)-related protein 1 (139 aa).

A signal peptide spans 1–22 (MPNIFKILLIVLLAVVSFRLSA). The tract at residues 23–90 (STGDKKTAND…VPSHLTNRSM (68 aa)) is required for secretion from the host cytoplasm to the host apoplasm. Asparagine 37 and asparagine 87 each carry an N-linked (GlcNAc...) asparagine glycan. Residues 66–139 (AIGRSNAQGG…SPSGPDPHHH (74 aa)) form a disordered region. A coiled-coil region spans residues 100 to 125 (EKGAATRVEKMRAQLRELAEKMTDKD). Residues 106–128 (RVEKMRAQLRELAEKMTDKDPKR) are compositionally biased toward basic and acidic residues. The CLE motif lies at 128–139 (RLSPSGPDPHHH).

This sequence belongs to the CLV3/ESR signal peptide family. As to expression, highly expressed exclusively within the dorsal esophageal gland cell during syncytium formation in host plants (at protein level).

It localises to the secreted. It is found in the host cytoplasm. The protein resides in the host extracellular space. The protein localises to the extracellular space. Its subcellular location is the apoplast. Mimics host plant CLE extracellular signal peptides that regulate cell fate. May play a role in the differentiation or division of feeding cells (syncytia) induced in plant roots during infection. The sequence is that of CLAVATA3/ESR (CLE)-related protein 1 (CLE1) from Heterodera glycines (Soybean cyst nematode worm).